We begin with the raw amino-acid sequence, 109 residues long: Aquaporin-2 (109 aa).

Residues 1–6 lie on the Cytoplasmic side of the membrane; sequence SIAFSR. The helical transmembrane segment at 7 to 27 threads the bilayer; it reads AVFSEFLATLLFVFFGLGSAL. Over 28 to 35 the chain is Extracellular; it reads NWPQALPS. A helical membrane pass occupies residues 36–54; the sequence is VLQIAMAFGLAIGTLVQTL. At 55 to 59 the chain is on the cytoplasmic side; it reads GHISG. Positions 60 to 69 form an intramembrane region, discontinuously helical; that stretch reads AHINPAVTVA. The short motif at 63–65 is the NPA 1 element; it reads NPA. The Cytoplasmic segment spans residues 70–80; that stretch reads CLVGCHVSFLR. A helical transmembrane segment spans residues 81–102; the sequence is ATFYLAAQLLGAVAGAALLHEL. Topologically, residues 103–109 are extracellular; sequence TPPDIRG.

The protein belongs to the MIP/aquaporin (TC 1.A.8) family. As to quaternary structure, homotetramer. In terms of processing, serine phosphorylation is necessary and sufficient for expression at the apical membrane. Endocytosis is not phosphorylation-dependent. N-glycosylated.

The protein localises to the apical cell membrane. The protein resides in the basolateral cell membrane. Its subcellular location is the cell membrane. It localises to the cytoplasmic vesicle membrane. It is found in the golgi apparatus. The protein localises to the trans-Golgi network membrane. It carries out the reaction H2O(in) = H2O(out). The catalysed reaction is glycerol(in) = glycerol(out). Functionally, forms a water-specific channel that provides the plasma membranes of renal collecting duct with high permeability to water, thereby permitting water to move in the direction of an osmotic gradient. Plays an essential role in renal water homeostasis. Could also be permeable to glycerol. The protein is Aquaporin-2 of Elephas maximus (Indian elephant).